The following is a 271-amino-acid chain: Phosphate import ATP-binding protein PstB 2 (271 aa).

Positions 25–266 constitute an ABC transporter domain; it reads MATEDLHVYY…PQQKQTEDYI (242 aa). 57 to 64 serves as a coordination point for ATP; sequence GPSGCGKS.

This sequence belongs to the ABC transporter superfamily. Phosphate importer (TC 3.A.1.7) family. As to quaternary structure, the complex is composed of two ATP-binding proteins (PstB), two transmembrane proteins (PstC and PstA) and a solute-binding protein (PstS).

It localises to the cell membrane. It carries out the reaction phosphate(out) + ATP + H2O = ADP + 2 phosphate(in) + H(+). Its function is as follows. Part of the ABC transporter complex PstSACB involved in phosphate import. Responsible for energy coupling to the transport system. The protein is Phosphate import ATP-binding protein PstB 2 of Listeria monocytogenes serotype 4b (strain F2365).